A 956-amino-acid polypeptide reads, in one-letter code: Translation initiation factor IF-2 (956 aa).

The interval 33–370 (SHASSVEEAD…PVTERKFHEL (338 aa)) is disordered. Residues 46-60 (IASSFSAGVTKNVQA) are compositionally biased toward polar residues. The segment covering 63-73 (AKDKQVAEQKA) has biased composition (basic and acidic residues). Residues 76-100 (AKATTPQPAASKAAEKPAAATQEAS) are compositionally biased toward low complexity. Basic and acidic residues-rich tracts occupy residues 112-125 (FKAE…EQVA), 134-143 (SNDRKSDYRQ), and 179-192 (NDGH…DKNR). Low complexity predominate over residues 199-213 (RQQDTGRQGQTQAGA). Basic and acidic residues-rich tracts occupy residues 234–258 (ARQR…RQEA) and 266–276 (QTEDKKHREAS). Positions 277–293 (AKATESVASMAAASVAK) are enriched in low complexity. Residues 303-320 (NRPDKGHDRDHGLEDGQK) are compositionally biased toward basic and acidic residues. The segment covering 325-343 (SWNSQNQVRNQKNSNWNNN) has biased composition (low complexity). The span at 344-354 (KKNKKGKHHKN) shows a compositional bias: basic residues. The 170-residue stretch at 457-626 (ERAPVVTIMG…LLVAEVEELK (170 aa)) folds into the tr-type G domain. Positions 466–473 (GHVDHGKT) are G1. 466 to 473 (GHVDHGKT) provides a ligand contact to GTP. The G2 stretch occupies residues 491-495 (GITQH). Positions 512 to 515 (DTPG) are G3. Residues 512 to 516 (DTPGH) and 566 to 569 (NKID) each bind GTP. The segment at 566–569 (NKID) is G4. Residues 602–604 (SAK) form a G5 region.

Belongs to the TRAFAC class translation factor GTPase superfamily. Classic translation factor GTPase family. IF-2 subfamily.

The protein localises to the cytoplasm. Functionally, one of the essential components for the initiation of protein synthesis. Protects formylmethionyl-tRNA from spontaneous hydrolysis and promotes its binding to the 30S ribosomal subunits. Also involved in the hydrolysis of GTP during the formation of the 70S ribosomal complex. The polypeptide is Translation initiation factor IF-2 (Streptococcus equi subsp. equi (strain 4047)).